Reading from the N-terminus, the 640-residue chain is Insulin-like growth factor 1 receptor (640 aa).

Fibronectin type-III domains are found at residues 5 to 101 (VPRP…TMPA) and 107 to 200 (IPGP…VQAK). At 14–208 (EVMQIANTTM…AKTTYENFIH (195 aa)) the chain is on the extracellular side. N-linked (GlcNAc...) asparagine glycosylation is found at N20, N29, N37, N173, and N186. A helical membrane pass occupies residues 209-232 (LMIALPIAVLLIVGGLVIMLYVFH). At 233–640 (RKRNSSRLGN…ALPLPQSSTC (408 aa)) the chain is on the cytoplasmic side. The IRS1- and SHC1-binding signature appears at 250 to 253 (NPEY). Phosphotyrosine is present on Y253. The region spanning 272 to 547 (ITMSRELGQG…SVKDEMEAGF (276 aa)) is the Protein kinase domain. Residues 278–286 (LGQGSFGMV) and K306 contribute to the ATP site. Residue D408 is the Proton acceptor of the active site. Y434, Y438, and Y439 each carry phosphotyrosine; by autocatalysis. Residues K441 and K444 each participate in a glycyl lysine isopeptide (Lys-Gly) (interchain with G-Cter in ubiquitin) cross-link. Phosphoserine; by GSK3-beta is present on S551. S555 bears the Phosphoserine mark. Residues 555 to 640 (SEENKPPEPE…ALPLPQSSTC (86 aa)) form a disordered region. Positions 563 to 572 (PEELDLEPEN) are enriched in acidic residues. A compositionally biased stretch (low complexity) spans 573–589 (MESVPLDPSASSASLPL). The segment covering 590–599 (PDRHSGHKAE) has biased composition (basic and acidic residues).

It belongs to the protein kinase superfamily. Tyr protein kinase family. Insulin receptor subfamily. In terms of assembly, tetramer of 2 alpha and 2 beta chains linked by disulfide bonds. The alpha chains contribute to the formation of the ligand-binding domain, while the beta chain carries the kinase domain. Interacts with PIK3R1 and with the PTB/PID domains of IRS1 and SHC1 in vitro when autophosphorylated on tyrosine residues. Forms a hybrid receptor with INSR, the hybrid is a tetramer consisting of 1 alpha chain and 1 beta chain of INSR and 1 alpha chain and 1 beta chain of IGF1R. Interacts with ARRB1 and ARRB2. Interacts with GRB10. Interacts with RACK1. Interacts with SOCS1, SOCS2 and SOCS3. Interacts with 14-3-3 proteins. Interacts with NMD2. Interacts with MAP3K5. Interacts with STAT3. Interacts (nascent precursor form) with ZFAND2B. Post-translationally, autophosphorylated on tyrosine residues in response to ligand binding. Autophosphorylation occurs in trans, i.e. one subunit of the dimeric receptor phosphorylates tyrosine residues on the other subunit. Autophosphorylation occurs in a sequential manner; Tyr-438 is predominantly phosphorylated first, followed by phosphorylation of Tyr-434 and Tyr-439. While every single phosphorylation increases kinase activity, all three tyrosine residues in the kinase activation loop (Tyr-438, Tyr-434 and Tyr-439) have to be phosphorylated for optimal activity. Can be autophosphorylated at additional tyrosine residues (in vitro). Autophosphorylated is followed by phosphorylation of juxtamembrane tyrosines and C-terminal serines. May also be phosphorylated at Tyr-434 and Tyr-439 by mTORC2. Phosphorylation of Tyr-253 is required for IRS1- and SHC1-binding. Phosphorylation of Ser-551 by GSK-3beta restrains kinase activity and promotes cell surface expression, it requires a priming phosphorylation at Ser-555. Dephosphorylated by PTPN1. Polyubiquitinated at Lys-441 and Lys-444 through both 'Lys-48' and 'Lys-29' linkages, promoting receptor endocytosis and subsequent degradation by the proteasome. Ubiquitination is facilitated by pre-existing phosphorylation. In terms of processing, sumoylated with SUMO1. Post-translationally, controlled by regulated intramembrane proteolysis (RIP). Undergoes metalloprotease-dependent constitutive ectodomain shedding to produce a membrane-anchored 52 kDa C-Terminal fragment which is further processed by presenilin gamma-secretase to yield an intracellular 50 kDa fragment.

The protein resides in the cell membrane. It carries out the reaction L-tyrosyl-[protein] + ATP = O-phospho-L-tyrosyl-[protein] + ADP + H(+). Activated by autophosphorylation at Tyr-434, Tyr-438 and Tyr-439 on the kinase activation loop; phosphorylation at all three tyrosine residues is required for optimal kinase activity. Inhibited by MSC1609119A-1, BMS-754807, PQIP, benzimidazole pyridinone, isoquinolinedione, bis-azaindole, 3-cyanoquinoline, 2,4-bis-arylamino-1,3-pyrimidine, pyrrolopyrimidine, pyrrole-5-carboxaldehyde, picropodophyllin (PPP), tyrphostin derivatives. While most inhibitors bind to the ATP binding pocket, MSC1609119A-1 functions as allosteric inhibitor and binds close to the DFG motif and the activation loop. Functionally, receptor tyrosine kinase which mediates actions of insulin-like growth factor 1 (IGF1). Binds IGF1 with high affinity and IGF2 and insulin (INS) with a lower affinity. The activated IGF1R is involved in cell growth and survival control. IGF1R is crucial for tumor transformation and survival of malignant cell. Ligand binding activates the receptor kinase, leading to receptor autophosphorylation, and tyrosines phosphorylation of multiple substrates, that function as signaling adapter proteins including, the insulin-receptor substrates (IRS1/2), Shc and 14-3-3 proteins. Phosphorylation of IRSs proteins lead to the activation of two main signaling pathways: the PI3K-AKT/PKB pathway and the Ras-MAPK pathway. The result of activating the MAPK pathway is increased cellular proliferation, whereas activating the PI3K pathway inhibits apoptosis and stimulates protein synthesis. Phosphorylated IRS1 can activate the 85 kDa regulatory subunit of PI3K (PIK3R1), leading to activation of several downstream substrates, including protein AKT/PKB. AKT phosphorylation, in turn, enhances protein synthesis through mTOR activation and triggers the antiapoptotic effects of IGFIR through phosphorylation and inactivation of BAD. In parallel to PI3K-driven signaling, recruitment of Grb2/SOS by phosphorylated IRS1 or Shc leads to recruitment of Ras and activation of the ras-MAPK pathway. In addition to these two main signaling pathways IGF1R signals also through the Janus kinase/signal transducer and activator of transcription pathway (JAK/STAT). Phosphorylation of JAK proteins can lead to phosphorylation/activation of signal transducers and activators of transcription (STAT) proteins. In particular activation of STAT3, may be essential for the transforming activity of IGF1R. The JAK/STAT pathway activates gene transcription and may be responsible for the transforming activity. JNK kinases can also be activated by the IGF1R. IGF1 exerts inhibiting activities on JNK activation via phosphorylation and inhibition of MAP3K5/ASK1, which is able to directly associate with the IGF1R. When present in a hybrid receptor with INSR, binds IGF1. In Bos taurus (Bovine), this protein is Insulin-like growth factor 1 receptor (IGF1R).